Here is an 84-residue protein sequence, read N- to C-terminus: Beta-defensin 119 (84 aa).

Positions 1 to 21 (MKLLYLFLAILLAIEEPVISG) are cleaved as a signal peptide. Intrachain disulfides connect cysteine 28–cysteine 55, cysteine 35–cysteine 49, and cysteine 39–cysteine 56.

The protein belongs to the beta-defensin family.

It localises to the secreted. Functionally, has antibacterial activity. This chain is Beta-defensin 119 (DEFB119), found in Hylobates lar (Lar gibbon).